Here is a 236-residue protein sequence, read N- to C-terminus: Transcriptional activator protein SolR (236 aa).

The HTH luxR-type domain maps to 169-234; sequence VPESNAVLTT…QAVVKAIATG (66 aa). The segment at residues 193–212 is a DNA-binding region (H-T-H motif); the sequence is AYEIGQILRISERTVNFHVN.

Belongs to the autoinducer-regulated transcriptional regulatory protein family.

The protein is Transcriptional activator protein SolR (solR) of Ralstonia solanacearum (Pseudomonas solanacearum).